The chain runs to 329 residues: Malate dehydrogenase (329 aa).

NAD(+) is bound at residue 12–18 (GAAGQIG). Substrate contacts are provided by arginine 95 and arginine 101. Residues asparagine 108, glutamine 115, and 132 to 134 (VGN) each bind NAD(+). Positions 134 and 165 each coordinate substrate. Histidine 190 acts as the Proton acceptor in catalysis.

This sequence belongs to the LDH/MDH superfamily. MDH type 2 family.

The catalysed reaction is (S)-malate + NAD(+) = oxaloacetate + NADH + H(+). Its function is as follows. Catalyzes the reversible oxidation of malate to oxaloacetate. This is Malate dehydrogenase from Polynucleobacter asymbioticus (strain DSM 18221 / CIP 109841 / QLW-P1DMWA-1) (Polynucleobacter necessarius subsp. asymbioticus).